A 567-amino-acid chain; its full sequence is Restriction of telomere capping protein 5 (567 aa).

The region spanning 289 to 515 is the TLDc domain; that stretch reads KVMTPALLAQ…IQDVEVWGCG (227 aa).

Belongs to the RTC5 family.

It is found in the cytoplasm. In terms of biological role, may be involved in a process influencing telomere capping. In Saccharomyces cerevisiae (strain YJM789) (Baker's yeast), this protein is Restriction of telomere capping protein 5 (RTC5).